The sequence spans 268 residues: MGQKINPHGFRLGITTDWKSRWYADKQYAEYVKEDVAIRKLLATGMERAGIAKVEIERTRDRVRVDIHTARPGIVIGRRGAEADRIRSELEKLTGKQVQLNILEVKNAEAEAQLVAQGVAEQLSNRVAFRRAMRKAIQSAMRQPNVKGIRVQCSGRLGGAEMSRSEFYREGRVPLHTLRADIDYGLYEAKTTFGRIGVKVWIYKGDIVGGKRELAANTAAPAGDRPRRERPSRPRRSGATGTTATSTEAGRAATATADAPATEQNQEG.

Residues 38 to 106 (IRKLLATGME…QVQLNILEVK (69 aa)) enclose the KH type-2 domain. Residues 217–268 (NTAAPAGDRPRRERPSRPRRSGATGTTATSTEAGRAATATADAPATEQNQEG) form a disordered region. Low complexity predominate over residues 237–268 (SGATGTTATSTEAGRAATATADAPATEQNQEG).

Belongs to the universal ribosomal protein uS3 family. In terms of assembly, part of the 30S ribosomal subunit. Forms a tight complex with proteins S10 and S14.

Functionally, binds the lower part of the 30S subunit head. Binds mRNA in the 70S ribosome, positioning it for translation. The protein is Small ribosomal subunit protein uS3 of Rhodococcus erythropolis (strain PR4 / NBRC 100887).